The primary structure comprises 98 residues: NADH-ubiquinone oxidoreductase chain 4L (98 aa).

Transmembrane regions (helical) follow at residues 1–21 (MSLVYVNVMIAFLISLLGLLM), 29–49 (SLLCLEGMMLSLFILGTIMIL), and 61–81 (IILLVFAACEAAIGLSLLVMV).

It belongs to the complex I subunit 4L family. As to quaternary structure, core subunit of respiratory chain NADH dehydrogenase (Complex I) which is composed of 45 different subunits.

Its subcellular location is the mitochondrion inner membrane. The enzyme catalyses a ubiquinone + NADH + 5 H(+)(in) = a ubiquinol + NAD(+) + 4 H(+)(out). Functionally, core subunit of the mitochondrial membrane respiratory chain NADH dehydrogenase (Complex I) which catalyzes electron transfer from NADH through the respiratory chain, using ubiquinone as an electron acceptor. Part of the enzyme membrane arm which is embedded in the lipid bilayer and involved in proton translocation. This chain is NADH-ubiquinone oxidoreductase chain 4L (MT-ND4L), found in Urotrichus talpoides (Japanese shrew mole).